Consider the following 314-residue polypeptide: tRNA dimethylallyltransferase (314 aa).

10–17 (GPTGVGKT) is an ATP binding site. 12-17 (TGVGKT) is a binding site for substrate. An interaction with substrate tRNA region spans residues 35 to 38 (DSMQ).

This sequence belongs to the IPP transferase family. As to quaternary structure, monomer. Mg(2+) serves as cofactor.

It catalyses the reaction adenosine(37) in tRNA + dimethylallyl diphosphate = N(6)-dimethylallyladenosine(37) in tRNA + diphosphate. Functionally, catalyzes the transfer of a dimethylallyl group onto the adenine at position 37 in tRNAs that read codons beginning with uridine, leading to the formation of N6-(dimethylallyl)adenosine (i(6)A). In Finegoldia magna (strain ATCC 29328 / DSM 20472 / WAL 2508) (Peptostreptococcus magnus), this protein is tRNA dimethylallyltransferase.